Reading from the N-terminus, the 171-residue chain is Peptide methionine sulfoxide reductase MsrA (171 aa).

Cys-13 is an active-site residue.

Belongs to the MsrA Met sulfoxide reductase family.

The enzyme catalyses L-methionyl-[protein] + [thioredoxin]-disulfide + H2O = L-methionyl-(S)-S-oxide-[protein] + [thioredoxin]-dithiol. It catalyses the reaction [thioredoxin]-disulfide + L-methionine + H2O = L-methionine (S)-S-oxide + [thioredoxin]-dithiol. Functionally, has an important function as a repair enzyme for proteins that have been inactivated by oxidation. Catalyzes the reversible oxidation-reduction of methionine sulfoxide in proteins to methionine. This is Peptide methionine sulfoxide reductase MsrA from Mycobacterium sp. (strain MCS).